The sequence spans 861 residues: Probable linoleate 9S-lipoxygenase 8 (861 aa).

One can recognise a PLAT domain in the interval 33-160 (FTDLASSLTG…NYKSDRIFFA (128 aa)). In terms of domain architecture, Lipoxygenase spans 163 to 861 (PYLPSETPEL…GKGIPNSVSI (699 aa)). Residues 220–245 (TLGGSAEYPYPRRGRTGRPPTRTDPK) form a disordered region. The Fe cation site is built by H522, H527, H713, N717, and I861.

The protein belongs to the lipoxygenase family. As to quaternary structure, monomer. Fe cation serves as cofactor.

It localises to the cytoplasm. The enzyme catalyses (9Z,12Z)-octadecadienoate + O2 = (9S)-hydroperoxy-(10E,12Z)-octadecadienoate. The protein operates within lipid metabolism; oxylipin biosynthesis. In terms of biological role, plant lipoxygenases may be involved in a number of diverse aspects of plant physiology including growth and development, pest resistance, and senescence or responses to wounding. Catalyzes the hydroperoxidation of lipids containing a cis,cis-1,4-pentadiene structure. The sequence is that of Probable linoleate 9S-lipoxygenase 8 (LOX1.8) from Solanum tuberosum (Potato).